The chain runs to 306 residues: Protein farnesyltransferase/geranylgeranyltransferase type-1 subunit alpha (306 aa).

5 PFTA repeats span residues 48 to 82 (YSER…NLPN), 84 to 118 (NLYD…QIME), 125 to 159 (DPYR…TFDL), 161 to 195 (NDAK…SKKH), and 201 to 235 (TIDE…RFDR).

The protein belongs to the protein prenyltransferase subunit alpha family. Heterodimer of an alpha and a beta subunit. Requires Mg(2+) as cofactor.

The catalysed reaction is L-cysteinyl-[protein] + (2E,6E)-farnesyl diphosphate = S-(2E,6E)-farnesyl-L-cysteinyl-[protein] + diphosphate. The enzyme catalyses geranylgeranyl diphosphate + L-cysteinyl-[protein] = S-geranylgeranyl-L-cysteinyl-[protein] + diphosphate. Essential subunit of both the farnesyltransferase and the geranylgeranyltransferase complex. Contributes to the transfer of a farnesyl or geranylgeranyl moiety from farnesyl or geranylgeranyl diphosphate to a cysteine at the fourth position from the C-terminus of several proteins having the C-terminal sequence Cys-aliphatic-aliphatic-X. The polypeptide is Protein farnesyltransferase/geranylgeranyltransferase type-1 subunit alpha (RAM2) (Candida albicans (Yeast)).